The chain runs to 289 residues: Syntaxin-3 (289 aa).

Residues 1-263 lie on the Cytoplasmic side of the membrane; that stretch reads MKDRLEQLKA…MKYQGQARKK (263 aa). Positions 32–111 form a coiled coil; it reads MDEFFSEIEE…IEEDEVRSSA (80 aa). The t-SNARE coiled-coil homology domain occupies 191 to 253; the sequence is LSEIEGRHKD…EKARDETKRA (63 aa). Residues 264–284 form a helical; Anchor for type IV membrane protein membrane-spanning segment; the sequence is LIIIIVIVVVLLGILALIIGL. Residues 285–289 lie on the Extracellular side of the membrane; sequence SVGLK.

It belongs to the syntaxin family. In terms of assembly, interacts with REEP6. Interacts with PRPH2 in rod and cone photoreceptors. Interacts with ROM1. Interacts with SNAP25. Interacts with VAMP2. As to expression, heart, spleen, lung and kidney.

It localises to the membrane. In terms of biological role, potentially involved in docking of synaptic vesicles at presynaptic active zones. Apical receptor involved in membrane fusion of apical vesicles. Essential for survival of retinal photoreceetors. In Rattus norvegicus (Rat), this protein is Syntaxin-3 (Stx3).